Reading from the N-terminus, the 157-residue chain is Ribosome maturation factor RimP (157 aa).

It belongs to the RimP family.

It localises to the cytoplasm. Functionally, required for maturation of 30S ribosomal subunits. The polypeptide is Ribosome maturation factor RimP (Petrotoga mobilis (strain DSM 10674 / SJ95)).